The primary structure comprises 460 residues: Cytochrome P450 CYP71D312 (460 aa).

Heme is bound at residue Cys398.

This sequence belongs to the cytochrome P450 family. Requires heme as cofactor.

Functionally, probable heme-thiolate monooxygenase. In Panax ginseng (Korean ginseng), this protein is Cytochrome P450 CYP71D312.